Consider the following 587-residue polypeptide: Probable terpene synthase 12 (587 aa).

Residues Asp-338, Asp-342, and Glu-489 each contribute to the Mg(2+) site. Positions 338 to 342 (DDVYD) match the DDXXD motif motif.

This sequence belongs to the terpene synthase family. It depends on Mg(2+) as a cofactor.

Probable sesquiterpene synthase. In Ricinus communis (Castor bean), this protein is Probable terpene synthase 12 (TPS12).